Consider the following 316-residue polypeptide: DNA-directed RNA polymerase III subunit RPC6 (316 aa).

Position 2 is an N-acetylalanine (Ala2). Residues Lys5 and Lys7 each participate in a glycyl lysine isopeptide (Lys-Gly) (interchain with G-Cter in SUMO2) cross-link. Positions 287, 290, 296, and 307 each coordinate [4Fe-4S] cluster.

Belongs to the eukaryotic RPC34/RPC39 RNA polymerase subunit family. In terms of assembly, component of the RNA polymerase III complex consisting of 17 subunits: a ten-subunit horseshoe-shaped catalytic core composed of POLR3A/RPC1, POLR3B/RPC2, POLR1C/RPAC1, POLR1D/RPAC2, POLR3K/RPC10, POLR2E/RPABC1, POLR2F/RPABC2, POLR2H/RPABC3, POLR2K/RPABC4 and POLR2L/RPABC5; a mobile stalk composed of two subunits POLR3H/RPC8 and CRCP/RPC9, protruding from the core and functioning primarily in transcription initiation; and additional subunits homologous to general transcription factors of the RNA polymerase II machinery, POLR3C/RPC3-POLR3F/RPC6-POLR3G/RPC7 heterotrimer required for transcription initiation and POLR3D/RPC4-POLR3E/RPC5 heterodimer involved in both transcription initiation and termination. Directly interacts with POLR3C. Interacts with TBP and TFIIIB90 and GTF3C4. Interacts with MAF1. As part of the RNA polymerase III complex, interacts with PKP2.

It localises to the nucleus. Functionally, DNA-dependent RNA polymerase catalyzes the transcription of DNA into RNA using the four ribonucleoside triphosphates as substrates. Specific peripheric component of RNA polymerase III (Pol III) which synthesizes small non-coding RNAs including 5S rRNA, snRNAs, tRNAs and miRNAs from at least 500 distinct genomic loci. Part of POLR3C/RPC3-POLR3F/RPC6-POLR3G/RPC7 heterotrimer that coordinates the dynamics of Pol III stalk and clamp modules during the transition from apo to elongation state. Pol III plays a key role in sensing and limiting infection by intracellular bacteria and DNA viruses, including varicella zoster virus. Acts as a nuclear and cytosolic DNA sensor detecting AT-rich DNA, involved in innate immune response. Can sense non-self dsDNA that serves as template for transcription into dsRNA. The non-self RNA polymerase III transcripts, such as Epstein-Barr virus-encoded RNAs (EBERs) induce type I interferon and NF-kappa-B through the RIG-I pathway. Preferentially binds double-stranded DNA (dsDNA). This chain is DNA-directed RNA polymerase III subunit RPC6 (POLR3F), found in Bos taurus (Bovine).